The following is an 867-amino-acid chain: DNA replication licensing factor mcm6 (867 aa).

Positions 51–76 (IDKNNNNNNNEDNEDNNENENEYDEN) are disordered. Over residues 61–75 (EDNEDNNENENEYDE) the composition is skewed to acidic residues. The MCM domain occupies 420–626 (IYQNLVNSIC…ESDHRIAEHI (207 aa)). Residues Ser473, Thr474, Lys476, Ser477, and Asn578 each coordinate ATP. An Arginine finger motif is present at residues 602–605 (SRFD). 2 residues coordinate ADP: Arg693 and Glu696.

The protein belongs to the MCM family. Component of the MCM2-7 complex. The complex forms a toroidal hexameric ring with the proposed subunit order MCM2-MCM6-MCM4-MCM7-MCM3-MCM5 (By simililarity).

It localises to the nucleus. It carries out the reaction ATP + H2O = ADP + phosphate + H(+). Functionally, acts as a component of the MCM2-7 complex (MCM complex) which is the replicative helicase essential for 'once per cell cycle' DNA replication initiation and elongation in eukaryotic cells. Core component of CDC45-MCM-GINS (CMG) helicase, the molecular machine that unwinds template DNA during replication, and around which the replisome is built. The active ATPase sites in the MCM2-7 ring are formed through the interaction surfaces of two neighboring subunits such that a critical structure of a conserved arginine finger motif is provided in trans relative to the ATP-binding site of the Walker A box of the adjacent subunit. The six ATPase active sites, however, are likely to contribute differentially to the complex helicase activity. The polypeptide is DNA replication licensing factor mcm6 (mcm6) (Dictyostelium discoideum (Social amoeba)).